We begin with the raw amino-acid sequence, 322 residues long: UPF0324 membrane protein BB4178 (322 aa).

10 consecutive transmembrane segments (helical) span residues 13–35 (FIRQ…YGNF), 50–69 (FTAR…NISI), 76–98 (GLPG…TVAG), 108–127 (TAML…VLAF), 139–161 (AVAV…VIYH), 171–193 (ALGI…ASNI), 209–231 (VALL…AAGA), 241–260 (VPWF…LDIL), 273–292 (VFVL…FAQI), and 296–318 (GPRV…YGIV).

The protein belongs to the UPF0324 family.

The protein localises to the cell membrane. This chain is UPF0324 membrane protein BB4178, found in Bordetella bronchiseptica (strain ATCC BAA-588 / NCTC 13252 / RB50) (Alcaligenes bronchisepticus).